The primary structure comprises 98 residues: NADH-ubiquinone oxidoreductase chain 4L (98 aa).

The next 3 helical transmembrane spans lie at 1-21, 29-49, and 61-81; these read MSLT…GLLM, SLLC…VTIL, and IILL…LVMV.

The protein belongs to the complex I subunit 4L family. In terms of assembly, core subunit of respiratory chain NADH dehydrogenase (Complex I) which is composed of 45 different subunits.

Its subcellular location is the mitochondrion inner membrane. It catalyses the reaction a ubiquinone + NADH + 5 H(+)(in) = a ubiquinol + NAD(+) + 4 H(+)(out). Core subunit of the mitochondrial membrane respiratory chain NADH dehydrogenase (Complex I) which catalyzes electron transfer from NADH through the respiratory chain, using ubiquinone as an electron acceptor. Part of the enzyme membrane arm which is embedded in the lipid bilayer and involved in proton translocation. This Sturnira lilium (Lesser yellow-shouldered bat) protein is NADH-ubiquinone oxidoreductase chain 4L (MT-ND4L).